A 161-amino-acid chain; its full sequence is MNINATIFGQTIAFFLFVFFCMKYIWPNLISLVEKRRENIAQALNEAKQAKLNLKISKEKAKKRIESAQIKCKNIINEANETKKLLIEEAKKEAIKIKEHIISQGRLDILDEKKRMCEDLKTKISEIIVMSVEKIIESSINKKISDNIIERSISKINKIKG.

A helical transmembrane segment spans residues 12–32 (IAFFLFVFFCMKYIWPNLISL).

This sequence belongs to the ATPase B chain family. As to quaternary structure, F-type ATPases have 2 components, F(1) - the catalytic core - and F(0) - the membrane proton channel. F(1) has five subunits: alpha(3), beta(3), gamma(1), delta(1), epsilon(1). F(0) has three main subunits: a(1), b(2) and c(10-14). The alpha and beta chains form an alternating ring which encloses part of the gamma chain. F(1) is attached to F(0) by a central stalk formed by the gamma and epsilon chains, while a peripheral stalk is formed by the delta and b chains.

The protein resides in the cell membrane. In terms of biological role, f(1)F(0) ATP synthase produces ATP from ADP in the presence of a proton or sodium gradient. F-type ATPases consist of two structural domains, F(1) containing the extramembraneous catalytic core and F(0) containing the membrane proton channel, linked together by a central stalk and a peripheral stalk. During catalysis, ATP synthesis in the catalytic domain of F(1) is coupled via a rotary mechanism of the central stalk subunits to proton translocation. Component of the F(0) channel, it forms part of the peripheral stalk, linking F(1) to F(0). This Wigglesworthia glossinidia brevipalpis protein is ATP synthase subunit b.